The chain runs to 449 residues: C4-dicarboxylate transport protein (449 aa).

8 consecutive transmembrane segments (helical) span residues 18 to 38 (PFYL…ALLG), 61 to 81 (MIIS…VAHV), 93 to 113 (VYFL…AHVV), 159 to 179 (FVGD…IALA), 202 to 222 (LVQM…AFTI), 244 to 264 (SLLF…FSIL), 346 to 366 (LFLV…AGFI), and 369 to 389 (AATL…ILGV).

It belongs to the dicarboxylate/amino acid:cation symporter (DAACS) (TC 2.A.23) family.

The protein localises to the cell inner membrane. Functionally, responsible for the transport of dicarboxylates such as succinate, fumarate, and malate from the periplasm across the membrane. This Xylella fastidiosa (strain M23) protein is C4-dicarboxylate transport protein.